We begin with the raw amino-acid sequence, 237 residues long: MKAALLYEGKAKKVYQSSEDEHQLVLSYKNDATAFNGEKKSQFEGKGRLNNEISSLIFQRLHEAGISTHFIKRLDSTQQIVQKTSIIPLEVVIRNLATGSITKRLGIKEKVSFTPPLLELFYKDDALGDPLINDEHALLLTDITETELAEIKDKAREVNAALQEIFQSIGIKLVDFKLEFGRNKDGEILLSDEVSPDTCRLWDIETNEKLDKDVFRQGTGDLITVYQEILNRLEVHV.

The protein belongs to the SAICAR synthetase family.

The catalysed reaction is 5-amino-1-(5-phospho-D-ribosyl)imidazole-4-carboxylate + L-aspartate + ATP = (2S)-2-[5-amino-1-(5-phospho-beta-D-ribosyl)imidazole-4-carboxamido]succinate + ADP + phosphate + 2 H(+). The protein operates within purine metabolism; IMP biosynthesis via de novo pathway; 5-amino-1-(5-phospho-D-ribosyl)imidazole-4-carboxamide from 5-amino-1-(5-phospho-D-ribosyl)imidazole-4-carboxylate: step 1/2. In Oceanobacillus iheyensis (strain DSM 14371 / CIP 107618 / JCM 11309 / KCTC 3954 / HTE831), this protein is Phosphoribosylaminoimidazole-succinocarboxamide synthase.